Consider the following 416-residue polypeptide: PTS system N-acetylglucosamine-specific EIIC component (416 aa).

The PTS EIIC type-1 domain maps to 16–406; the sequence is SGLFQGLQKV…FNLKTPGREP (391 aa). 10 helical membrane-spanning segments follow: residues 68–88, 96–116, 130–150, 170–190, 196–216, 266–286, 298–318, 323–343, 344–364, and 375–395; these read AGGALTGSLPILFCIGVAIGF, TALAAVVGFLVYSKVLEAFPV, TYNDPGVLGGIIMGLLAAVLW, LVPIIMAFVGIVVGVFFGLVW, GISNFGEWMTGLGSGGAALFG, IFQAGFFPIMMFGLPAAALAM, VLGMMISLAATSFVTGVTEPI, MFIAPVLYVLHAVLTAISMAI, TWGLGVHAGFNFSAGFIDYAL, and IIPIGLVFAAIYYVTFRFAIV.

Its subcellular location is the cell membrane. In terms of biological role, the phosphoenolpyruvate-dependent sugar phosphotransferase system (sugar PTS), a major carbohydrate active transport system, catalyzes the phosphorylation of incoming sugar substrates concomitantly with their translocation across the cell membrane. This system is involved in N-acetylglucosamine (GlcNAc) transport. High-affinity permease, which exhibits a narrow specificity for GlcNAc. Essential for C-signaling between vegetative growth and development. The polypeptide is PTS system N-acetylglucosamine-specific EIIC component (Streptomyces coelicolor (strain ATCC BAA-471 / A3(2) / M145)).